Here is a 349-residue protein sequence, read N- to C-terminus: Merozoite surface protein P38 (349 aa).

An N-terminal signal peptide occupies residues 1-21; the sequence is MKRWSIITGIVIIFCILTCKG. 6-Cys domains lie at 22-149 and 153-301; these read QVEN…ISNG and KIPG…YLTN. Cystine bridges form between C77–C127, C157–C183, C197–C278, and C208–C276. 3 N-linked (GlcNAc...) asparagine glycosylation sites follow: N294, N295, and N301. N315 carries the GPI-anchor amidated asparagine lipid modification. A propeptide spans 316–349 (removed in mature form); that stretch reads SEIFERIEREEISFAFSSYLSITLILLYLFFLNF.

The protein localises to the cell surface. It is found in the cell membrane. The polypeptide is Merozoite surface protein P38 (PFS38) (Plasmodium falciparum (isolate 3D7)).